The following is a 145-amino-acid chain: uncharacterized protein (145 aa).

2 disordered regions span residues M1–T41 and R122–L145. Residues G20–Q34 show a composition bias toward polar residues. The span at D134–L145 shows a compositional bias: basic and acidic residues.

In terms of tissue distribution, ubiquitous.

This is an uncharacterized protein from Homo sapiens (Human).